We begin with the raw amino-acid sequence, 449 residues long: Protein trichome birefringence-like 35 (449 aa).

The helical; Signal-anchor for type II membrane protein transmembrane segment at Leu-12–Phe-29 threads the bilayer. A GDS motif motif is present at residues Gly-185–Ser-187. The short motif at Asp-428–Asn-442 is the DCXHWCLPGXXDXWN motif element.

Belongs to the PC-esterase family. TBL subfamily.

The protein resides in the membrane. In terms of biological role, may act as a bridging protein that binds pectin and other cell wall polysaccharides. Probably involved in maintaining esterification of pectins. May be involved in the specific O-acetylation of cell wall polymers. This is Protein trichome birefringence-like 35 (TBL35) from Arabidopsis thaliana (Mouse-ear cress).